We begin with the raw amino-acid sequence, 567 residues long: Urease subunit alpha (567 aa).

Residues 129–567 (GGIDAHIHFI…LPLAQRYFLF (439 aa)) enclose the Urease domain. 3 residues coordinate Ni(2+): His-134, His-136, and Lys-217. Residue Lys-217 is modified to N6-carboxylysine. Residue His-219 coordinates substrate. Ni(2+) contacts are provided by His-246 and His-272. Catalysis depends on His-320, which acts as the Proton donor. Asp-360 provides a ligand contact to Ni(2+).

The protein belongs to the metallo-dependent hydrolases superfamily. Urease alpha subunit family. Heterotrimer of UreA (gamma), UreB (beta) and UreC (alpha) subunits. Three heterotrimers associate to form the active enzyme. Ni cation serves as cofactor. Post-translationally, carboxylation allows a single lysine to coordinate two nickel ions.

It localises to the cytoplasm. It catalyses the reaction urea + 2 H2O + H(+) = hydrogencarbonate + 2 NH4(+). The protein operates within nitrogen metabolism; urea degradation; CO(2) and NH(3) from urea (urease route): step 1/1. The polypeptide is Urease subunit alpha (Hahella chejuensis (strain KCTC 2396)).